We begin with the raw amino-acid sequence, 238 residues long: Putative ABC transporter ATP-binding protein AF_1841 (238 aa).

An ABC transporter domain is found at 8–238 (IEADSVSYDY…EELLEKAGVI (231 aa)). An ATP-binding site is contributed by 41–48 (GANGSGKS).

It belongs to the ABC transporter superfamily.

Its subcellular location is the cell membrane. Functionally, probably part of an ABC transporter complex. Responsible for energy coupling to the transport system. This Archaeoglobus fulgidus (strain ATCC 49558 / DSM 4304 / JCM 9628 / NBRC 100126 / VC-16) protein is Putative ABC transporter ATP-binding protein AF_1841.